A 234-amino-acid chain; its full sequence is UPF0173 metal-dependent hydrolase Atu1317 (234 aa).

This sequence belongs to the UPF0173 family.

In Agrobacterium fabrum (strain C58 / ATCC 33970) (Agrobacterium tumefaciens (strain C58)), this protein is UPF0173 metal-dependent hydrolase Atu1317.